Consider the following 432-residue polypeptide: D-amino acid dehydrogenase (432 aa).

An FAD-binding site is contributed by V3–W17.

It belongs to the DadA oxidoreductase family. FAD serves as cofactor.

The enzyme catalyses a D-alpha-amino acid + A + H2O = a 2-oxocarboxylate + AH2 + NH4(+). The protein operates within amino-acid degradation; D-alanine degradation; NH(3) and pyruvate from D-alanine: step 1/1. Its function is as follows. Oxidative deamination of D-amino acids. This chain is D-amino acid dehydrogenase, found in Escherichia fergusonii (strain ATCC 35469 / DSM 13698 / CCUG 18766 / IAM 14443 / JCM 21226 / LMG 7866 / NBRC 102419 / NCTC 12128 / CDC 0568-73).